We begin with the raw amino-acid sequence, 231 residues long: Elongation factor 1-delta (231 aa).

The interval 75–136 (SGVTVEGNAP…AAAAAAKPAK (62 aa)) is disordered. Over residues 101–117 (ADDDDDDDVDLFGEETE) the composition is skewed to acidic residues. Positions 118 to 127 (EEKKAAEERA) are enriched in basic and acidic residues.

Belongs to the EF-1-beta/EF-1-delta family. As to quaternary structure, EF-1 is composed of 4 subunits: alpha, beta (1B-alpha=beta'), delta (1B-beta), and gamma (1B-gamma).

In terms of biological role, EF-1-beta and EF-1-beta' stimulate the exchange of GDP bound to EF-1-alpha to GTP. This Beta vulgaris (Sugar beet) protein is Elongation factor 1-delta.